The chain runs to 82 residues: Turripeptide IX-07 (82 aa).

A signal peptide spans 1–21 (MGFYMLLTVALLLTSLMNVEA). Residues 22 to 39 (TPVNQAERSALEKSGLGN) constitute a propeptide that is removed on maturation. 3 cysteine pairs are disulfide-bonded: C48/C70, C55/C74, and C60/C81.

In terms of tissue distribution, expressed by the venom duct.

Its subcellular location is the secreted. The sequence is that of Turripeptide IX-07 from Gemmula speciosa (Splendid gem-turris).